The chain runs to 89 residues: Small ribosomal subunit protein uS14 (89 aa).

It belongs to the universal ribosomal protein uS14 family. In terms of assembly, part of the 30S ribosomal subunit. Contacts proteins S3 and S10.

Functionally, binds 16S rRNA, required for the assembly of 30S particles and may also be responsible for determining the conformation of the 16S rRNA at the A site. This is Small ribosomal subunit protein uS14 from Chlorobaculum parvum (strain DSM 263 / NCIMB 8327) (Chlorobium vibrioforme subsp. thiosulfatophilum).